Here is a 353-residue protein sequence, read N- to C-terminus: Photosystem II D2 protein (353 aa).

Position 2 is an N-acetylthreonine (Thr-2). The residue at position 2 (Thr-2) is a Phosphothreonine. The chain crosses the membrane as a helical span at residues 41–61 (CAYFALGGWFTGTTFVTSWYT). Position 118 (His-118) interacts with chlorophyll a. A helical membrane pass occupies residues 125–141 (GFMLRQFELSRSVQLRP). Pheophytin a contacts are provided by Gln-130 and Asn-143. A helical membrane pass occupies residues 153 to 166 (VFVSVFLIYPLGQS). His-198 contributes to the chlorophyll a binding site. Residues 208–228 (AALLCAIHGATVENTLFEDGD) form a helical membrane-spanning segment. The a plastoquinone site is built by His-215 and Phe-262. His-215 lines the Fe cation pocket. Residue His-269 participates in Fe cation binding. Residues 279 to 295 (GLWMSALGVVGLALNLR) form a helical membrane-spanning segment.

This sequence belongs to the reaction center PufL/M/PsbA/D family. PSII is composed of 1 copy each of membrane proteins PsbA, PsbB, PsbC, PsbD, PsbE, PsbF, PsbH, PsbI, PsbJ, PsbK, PsbL, PsbM, PsbT, PsbX, PsbY, PsbZ, Psb30/Ycf12, at least 3 peripheral proteins of the oxygen-evolving complex and a large number of cofactors. It forms dimeric complexes. Requires The D1/D2 heterodimer binds P680, chlorophylls that are the primary electron donor of PSII, and subsequent electron acceptors. It shares a non-heme iron and each subunit binds pheophytin, quinone, additional chlorophylls, carotenoids and lipids. There is also a Cl(-1) ion associated with D1 and D2, which is required for oxygen evolution. The PSII complex binds additional chlorophylls, carotenoids and specific lipids. as cofactor.

The protein localises to the plastid. The protein resides in the chloroplast thylakoid membrane. It carries out the reaction 2 a plastoquinone + 4 hnu + 2 H2O = 2 a plastoquinol + O2. Photosystem II (PSII) is a light-driven water:plastoquinone oxidoreductase that uses light energy to abstract electrons from H(2)O, generating O(2) and a proton gradient subsequently used for ATP formation. It consists of a core antenna complex that captures photons, and an electron transfer chain that converts photonic excitation into a charge separation. The D1/D2 (PsbA/PsbD) reaction center heterodimer binds P680, the primary electron donor of PSII as well as several subsequent electron acceptors. D2 is needed for assembly of a stable PSII complex. The sequence is that of Photosystem II D2 protein from Arabis hirsuta (Hairy rock-cress).